We begin with the raw amino-acid sequence, 88 residues long: RNA-binding protein Hfq (88 aa).

The region spanning 9–68 (DPFLNALRRERIPVSIYLVNGIKLQGQIESFDQFVILLKNTVNQMVYKHAISTVVPARAV) is the Sm domain. Residues 66-88 (RAVSHHSASDRPQGERPQEKTEE) are disordered. Residues 72 to 88 (SASDRPQGERPQEKTEE) are compositionally biased toward basic and acidic residues.

It belongs to the Hfq family. Homohexamer.

Its function is as follows. RNA chaperone that binds small regulatory RNA (sRNAs) and mRNAs to facilitate mRNA translational regulation in response to envelope stress, environmental stress and changes in metabolite concentrations. Also binds with high specificity to tRNAs. The polypeptide is RNA-binding protein Hfq (Aliivibrio fischeri (strain ATCC 700601 / ES114) (Vibrio fischeri)).